We begin with the raw amino-acid sequence, 342 residues long: Cytochrome f (342 aa).

The first 28 residues, 1-28 (MKKQWIAGAFGLTAALAGLVSVPQSALA), serve as a signal peptide directing secretion. Positions 48, 51, and 52 each coordinate heme. Residues 305 to 325 (VTWLVAFLAAAFICQLLLVLK) form a helical membrane-spanning segment.

This sequence belongs to the cytochrome f family. The 4 large subunits of the cytochrome b6-f complex are cytochrome b6, subunit IV (17 kDa polypeptide, PetD), cytochrome f and the Rieske protein, while the 4 small subunits are PetG, PetL, PetM and PetN. The complex functions as a dimer. Heme serves as cofactor.

The protein resides in the cell inner membrane. Its function is as follows. Component of the cytochrome b6-f complex, which mediates electron transfer between photosystem II (PSII) and photosystem I (PSI), cyclic electron flow around PSI, and state transitions. The protein is Cytochrome f (petA) of Gloeobacter violaceus (strain ATCC 29082 / PCC 7421).